The chain runs to 89 residues: Small ribosomal subunit protein uS15 (89 aa).

The protein belongs to the universal ribosomal protein uS15 family. In terms of assembly, part of the 30S ribosomal subunit. Forms a bridge to the 50S subunit in the 70S ribosome, contacting the 23S rRNA.

Its function is as follows. One of the primary rRNA binding proteins, it binds directly to 16S rRNA where it helps nucleate assembly of the platform of the 30S subunit by binding and bridging several RNA helices of the 16S rRNA. In terms of biological role, forms an intersubunit bridge (bridge B4) with the 23S rRNA of the 50S subunit in the ribosome. The polypeptide is Small ribosomal subunit protein uS15 (Paramagnetospirillum magneticum (strain ATCC 700264 / AMB-1) (Magnetospirillum magneticum)).